A 200-amino-acid polypeptide reads, in one-letter code: Glycerol-3-phosphate acyltransferase (200 aa).

5 helical membrane-spanning segments follow: residues 3-23, 50-70, 75-95, 109-129, and 134-154; these read YIYS…FFIA, FYGA…VFLV, IKFM…SIFL, VFLA…LFIV, and YVSL…FFAG.

This sequence belongs to the PlsY family. In terms of assembly, probably interacts with PlsX.

The protein resides in the cell inner membrane. It catalyses the reaction an acyl phosphate + sn-glycerol 3-phosphate = a 1-acyl-sn-glycero-3-phosphate + phosphate. It functions in the pathway lipid metabolism; phospholipid metabolism. In terms of biological role, catalyzes the transfer of an acyl group from acyl-phosphate (acyl-PO(4)) to glycerol-3-phosphate (G3P) to form lysophosphatidic acid (LPA). This enzyme utilizes acyl-phosphate as fatty acyl donor, but not acyl-CoA or acyl-ACP. This chain is Glycerol-3-phosphate acyltransferase, found in Thermosipho melanesiensis (strain DSM 12029 / CIP 104789 / BI429).